A 34-amino-acid chain; its full sequence is MMIFQIGWAALAAIFTFSIAMVVWGRNGDGSIDI.

A helical transmembrane segment spans residues 3–23 (IFQIGWAALAAIFTFSIAMVV).

The protein belongs to the PetN family. As to quaternary structure, the 4 large subunits of the cytochrome b6-f complex are cytochrome b6, subunit IV (17 kDa polypeptide, PetD), cytochrome f and the Rieske protein, while the 4 small subunits are PetG, PetL, PetM and PetN. The complex functions as a dimer.

The protein resides in the cellular thylakoid membrane. Component of the cytochrome b6-f complex, which mediates electron transfer between photosystem II (PSII) and photosystem I (PSI), cyclic electron flow around PSI, and state transitions. The protein is Cytochrome b6-f complex subunit 8 of Prochlorococcus marinus subsp. pastoris (strain CCMP1986 / NIES-2087 / MED4).